The chain runs to 427 residues: Glutamate-1-semialdehyde 2,1-aminomutase (427 aa).

N6-(pyridoxal phosphate)lysine is present on lysine 265.

Belongs to the class-III pyridoxal-phosphate-dependent aminotransferase family. HemL subfamily. As to quaternary structure, homodimer. Requires pyridoxal 5'-phosphate as cofactor.

The protein resides in the cytoplasm. The enzyme catalyses (S)-4-amino-5-oxopentanoate = 5-aminolevulinate. It participates in porphyrin-containing compound metabolism; protoporphyrin-IX biosynthesis; 5-aminolevulinate from L-glutamyl-tRNA(Glu): step 2/2. The protein is Glutamate-1-semialdehyde 2,1-aminomutase of Burkholderia multivorans (strain ATCC 17616 / 249).